We begin with the raw amino-acid sequence, 176 residues long: Glycine-rich RNA-binding protein 7 (176 aa).

A2 carries the N-acetylalanine modification. The interval 2-41 (ASGDVEYRCFVGGLAWATDDRALETAFAQYGDVIDSKIIN) is required for RNA chaperone activity. The 79-residue stretch at 8–86 (YRCFVGGLAW…RSITVNEAQS (79 aa)) folds into the RRM domain. R49 is modified (ADP-ribosylarginine; by HopU1). The tract at residues 83–103 (EAQSRGSGGGGGHRGGGGGGY) is disordered. A compositionally biased stretch (gly residues) spans 88–103 (GSGGGGGHRGGGGGGY). Residues 88–175 (GSGGGGGHRG…GYGGSGGGGG (88 aa)) are glycine-rich (GR) required for cell-to-cell movement. Positions 97 to 148 (GGGGGGYRSGGGGGYSGGGGSYGGGGGRREGGGGYSGGGGGYSSRGGGGGSY) are nuclear targeting sequence (M9). 2 positions are modified to phosphoserine: S105 and S117. The tract at residues 131–176 (YSGGGGGYSSRGGGGGSYGGGRREGGGGYGGGEGGGYGGSGGGGGW) is disordered.

This sequence belongs to the GR-RBP family. Interacts with TRN1. Interacts with the Pseudomonas syringae type III effector HopU1. Binds to small phloem-mobile single-stranded RNAs (ss-sRNA, e.g. small interfering RNA (siRNA) and microRNA (miRNA)) in the phloeme exudate, including viral-derived sRNA (vsiRNA). Post-translationally, ADP-ribosylated by the Pseudomonas syringae type III effector HopU1. ADP-ribosylation reduces the ability of the protein to bind RNA. In terms of tissue distribution, ubiquitous with strong expression in guard cell.

It localises to the cytoplasm. The protein localises to the nucleus. It is found in the secreted. In terms of biological role, plays a role in RNA transcription or processing during stress. Binds RNAs and DNAs sequence with a preference to single-stranded nucleic acids. Displays strong affinity to poly(U) and poly(G) sequence. Involved in mRNA alternative splicing of numerous targets by modulating splice site selection. Negatively regulates the circadian oscillations of its own transcript as well as RBG8 transcript. Forms an interlocked post-transcriptional negative feedback loop with the RBG8 autoregulatory circuit. Both proteins negatively autoregulate and reciprocally crossregulate by binding to their pre-mRNAs and promoting unproductive splicing coupled to degradation via the NMD pathway. Involved in the regulation of abscisic acid and stress responses. Affects the growth and stress tolerance under high salt and dehydration stress conditions, and also confers freezing tolerance, particularly via the regulation of stomatal opening and closing in the guard cells. Exhibits RNA chaperone activity during the cold adaptation process. Involved in the export of mRNAs from the nucleus to the cytoplasm under cold stress conditions. Target of the Pseudomonas syringae type III effector HopU1, which could probably be involved in plant innate immunity. Component of the flowering autonomous pathway which promotes floral transition, at least partly by down-regulating FLC. Mediates cell-to-cell trafficking of RNA interference (RNAi) signals (small RNAs (sRNA), e.g. small interfering RNA (siRNA) and microRNA (miRNA)) which regulate growth and development, as well as responses to environmental inputs, including pathogen attack; can compromise zucchini yellow mosaic virus (ZYMV) and tobacco rattle virus (TRV) infections at the early stage. The protein is Glycine-rich RNA-binding protein 7 of Arabidopsis thaliana (Mouse-ear cress).